The following is a 186-amino-acid chain: Outer-membrane lipoprotein LolB (186 aa).

The first 16 residues, 1–16 (MRRLAVIASLAWALGG), serve as a signal peptide directing secretion. A lipid anchor (N-palmitoyl cysteine) is attached at Cys17. Cys17 carries the S-diacylglycerol cysteine lipid modification.

It belongs to the LolB family. Monomer.

Its subcellular location is the cell outer membrane. Functionally, plays a critical role in the incorporation of lipoproteins in the outer membrane after they are released by the LolA protein. This is Outer-membrane lipoprotein LolB from Thiobacillus denitrificans (strain ATCC 25259 / T1).